The primary structure comprises 430 residues: Enolase (430 aa).

Glutamine 165 contacts (2R)-2-phosphoglycerate. The Proton donor role is filled by glutamate 207. Mg(2+) contacts are provided by aspartate 244, glutamate 287, and aspartate 314. Residues lysine 339, arginine 368, serine 369, and lysine 390 each contribute to the (2R)-2-phosphoglycerate site. Lysine 339 serves as the catalytic Proton acceptor.

The protein belongs to the enolase family. In terms of assembly, component of the RNA degradosome, a multiprotein complex involved in RNA processing and mRNA degradation. It depends on Mg(2+) as a cofactor.

It is found in the cytoplasm. Its subcellular location is the secreted. The protein localises to the cell surface. It catalyses the reaction (2R)-2-phosphoglycerate = phosphoenolpyruvate + H2O. Its pathway is carbohydrate degradation; glycolysis; pyruvate from D-glyceraldehyde 3-phosphate: step 4/5. Its function is as follows. Catalyzes the reversible conversion of 2-phosphoglycerate (2-PG) into phosphoenolpyruvate (PEP). It is essential for the degradation of carbohydrates via glycolysis. In Xanthomonas euvesicatoria pv. vesicatoria (strain 85-10) (Xanthomonas campestris pv. vesicatoria), this protein is Enolase.